The chain runs to 493 residues: Amphoterin-induced protein 1 (493 aa).

A signal peptide spans Met-1–Ala-27. An LRRNT domain is found at Gly-28–Gly-61. Over Gly-28–Thr-372 the chain is Extracellular. Disulfide bonds link Cys-34–Cys-40 and Cys-38–Cys-47. LRR repeat units follow at residues Tyr-62–Thr-83, Asn-87–Pro-108, Asn-111–Gly-132, Ala-135–Asp-156, Gln-159–Lys-179, and Lys-186–Gln-206. An N-linked (GlcNAc...) asparagine glycan is attached at Asn-72. The LRRCT domain maps to Asn-221–Glu-272. 3 cysteine pairs are disulfide-bonded: Cys-225–Cys-253, Cys-227–Cys-270, and Cys-290–Cys-341. N-linked (GlcNAc...) asparagine glycosylation is found at Asn-269, Asn-315, Asn-349, and Asn-360. One can recognise an Ig-like C2-type domain in the interval Asn-269–Ser-353. Residues Ala-373–Leu-393 form a helical membrane-spanning segment. Over Thr-394–Val-493 the chain is Cytoplasmic. The segment at Lys-405–Val-493 is disordered. Residues Ser-408–Asn-424 are compositionally biased toward polar residues. The span at Gly-431–Ala-442 shows a compositional bias: basic and acidic residues. Phosphoserine is present on residues Ser-477 and Ser-481.

This sequence belongs to the immunoglobulin superfamily. AMIGO family. As to quaternary structure, homodimer, and heterodimer with AMIGO2 and AMIGO3. Interacts with KCNB1.

It is found in the cell membrane. The protein localises to the perikaryon. It localises to the cell projection. Its subcellular location is the dendrite. The protein resides in the axon. Promotes growth and fasciculation of neurites from cultured hippocampal neurons. May be involved in fasciculation as well as myelination of developing neural axons. May have a role in regeneration as well as neural plasticity in the adult nervous system. May mediate homophilic as well as heterophilic cell-cell interaction and contribute to signal transduction through its intracellular domain. Assembled with KCNB1 modulates the gating characteristics of the delayed rectifier voltage-dependent potassium channel KCNB1. The protein is Amphoterin-induced protein 1 of Rattus norvegicus (Rat).